The following is a 932-amino-acid chain: DNA mismatch repair protein MutS (932 aa).

Positions 1–13 (MTTDTDTDVDAGT) are enriched in acidic residues. The interval 1–26 (MTTDTDTDVDAGTDLEPQPEGPPEKM) is disordered. 648-655 (GPNMSGKS) provides a ligand contact to ATP. The disordered stretch occupies residues 865–892 (NQQNQASDDDEIARSPRGADTNTDAGIN).

This sequence belongs to the DNA mismatch repair MutS family.

Its function is as follows. This protein is involved in the repair of mismatches in DNA. It is possible that it carries out the mismatch recognition step. This protein has a weak ATPase activity. This is DNA mismatch repair protein MutS from Haloquadratum walsbyi (strain DSM 16790 / HBSQ001).